We begin with the raw amino-acid sequence, 204 residues long: MGAYKYIQELWRKKQSDVMRFLLRVRCWQYRQLSALHRAPRPTRPDKARRLGYKAKQGYVIYRIRVRRGGRKRPVPKGATYGKPVHHGVNQLKFARSLQSVAEERAGRHCGALRVLNSYWVGEDSTYKFFEVILIDPFHKAIRRNPDTQWITKPVHKHREMRGLTSAGRKSRGLGKGHKFHHTIGGSRRAAWRRRNTLQLHRYR.

Gly-2 carries N-myristoyl glycine lipidation. Ser-34 carries the post-translational modification Phosphoserine. Residue Lys-83 forms a Glycyl lysine isopeptide (Lys-Gly) (interchain with G-Cter in SUMO2) linkage. 2 positions are modified to phosphoserine: Ser-97 and Ser-100. The tract at residues 165–186 (TSAGRKSRGLGKGHKFHHTIGG) is disordered. Residues 169–182 (RKSRGLGKGHKFHH) are compositionally biased toward basic residues.

Belongs to the eukaryotic ribosomal protein eL15 family. In terms of assembly, component of the large ribosomal subunit. Interacts with IFIT1 (via TPR repeats 1-4).

It localises to the cytoplasm. Functionally, component of the large ribosomal subunit. The ribosome is a large ribonucleoprotein complex responsible for the synthesis of proteins in the cell. In Bos taurus (Bovine), this protein is Large ribosomal subunit protein eL15 (RPL15).